A 309-amino-acid chain; its full sequence is Probable non-structural 36.3 kDa protein (309 aa).

The protein is Probable non-structural 36.3 kDa protein (S6) of Avena sativa (Oat).